A 385-amino-acid polypeptide reads, in one-letter code: Homoserine O-succinyltransferase (385 aa).

The region spanning 45–355 (NAVLVCHALN…SHGHDAFLLD (311 aa)) is the AB hydrolase-1 domain. Residue Ser151 is the Nucleophile of the active site. Arg221 contacts substrate. Catalysis depends on residues Asp316 and His349. Residue Asp350 participates in substrate binding.

This sequence belongs to the AB hydrolase superfamily. MetX family. In terms of assembly, homodimer.

The protein localises to the cytoplasm. It carries out the reaction L-homoserine + succinyl-CoA = O-succinyl-L-homoserine + CoA. It participates in amino-acid biosynthesis; L-methionine biosynthesis via de novo pathway; O-succinyl-L-homoserine from L-homoserine: step 1/1. Transfers a succinyl group from succinyl-CoA to L-homoserine, forming succinyl-L-homoserine. The polypeptide is Homoserine O-succinyltransferase (Herminiimonas arsenicoxydans).